Reading from the N-terminus, the 288-residue chain is MYLLSFILGGLNTLLRQLRLSISSIDFYKDVYKNYQGYGIKYLFTLSFIPSIIYCIFILNYIITLKDYFNGTSSSKVTDNIEYIINQLPKIKYNNSKISVEEVEPIYLYSKNNNKIFVIDTKNQVSNQEKSKVPFVLEENKLKINLVSNTKKHFPSIVNYSEIFKQNEVILTPEIIKKYFADNLLYAPNLFIFFGTPVIILFWFVTFLLERSIIVLLVYGLANLLTTKTSIQTSIRLVMFSSGIPIILQPVIIILIPELSILIQLLQMFTTFLVFVAILQINKSLSHI.

Transmembrane regions (helical) follow at residues 43–63 (LFTLSFIPSIIYCIFILNYII), 190–210 (LFIFFGTPVIILFWFVTFLLE), 243–263 (GIPIILQPVIIILIPELSILI), and 265–285 (LLQMFTTFLVFVAILQINKSL).

The protein resides in the cell membrane. This is an uncharacterized protein from Rickettsia prowazekii (strain Madrid E).